A 649-amino-acid chain; its full sequence is Acetyl-coenzyme A synthetase (649 aa).

CoA is bound by residues 191-194 (RGGR), Thr-311, and Asn-335. ATP is bound by residues 387–389 (GEP), 411–416 (DTWWQT), Asp-500, and Arg-515. A CoA-binding site is contributed by Ser-523. Arg-526 provides a ligand contact to ATP. Mg(2+) is bound by residues Val-537, His-539, and Ile-542. Arg-584 contributes to the CoA binding site. An N6-acetyllysine modification is found at Lys-609.

The protein belongs to the ATP-dependent AMP-binding enzyme family. Requires Mg(2+) as cofactor. Post-translationally, acetylated. Deacetylation by the SIR2-homolog deacetylase activates the enzyme.

It catalyses the reaction acetate + ATP + CoA = acetyl-CoA + AMP + diphosphate. Catalyzes the conversion of acetate into acetyl-CoA (AcCoA), an essential intermediate at the junction of anabolic and catabolic pathways. AcsA undergoes a two-step reaction. In the first half reaction, AcsA combines acetate with ATP to form acetyl-adenylate (AcAMP) intermediate. In the second half reaction, it can then transfer the acetyl group from AcAMP to the sulfhydryl group of CoA, forming the product AcCoA. This is Acetyl-coenzyme A synthetase from Psychromonas ingrahamii (strain DSM 17664 / CCUG 51855 / 37).